Consider the following 254-residue polypeptide: Imidazole glycerol phosphate synthase subunit HisF (254 aa).

Active-site residues include D12 and D131.

The protein belongs to the HisA/HisF family. Heterodimer of HisH and HisF.

It is found in the cytoplasm. The enzyme catalyses 5-[(5-phospho-1-deoxy-D-ribulos-1-ylimino)methylamino]-1-(5-phospho-beta-D-ribosyl)imidazole-4-carboxamide + L-glutamine = D-erythro-1-(imidazol-4-yl)glycerol 3-phosphate + 5-amino-1-(5-phospho-beta-D-ribosyl)imidazole-4-carboxamide + L-glutamate + H(+). Its pathway is amino-acid biosynthesis; L-histidine biosynthesis; L-histidine from 5-phospho-alpha-D-ribose 1-diphosphate: step 5/9. Its function is as follows. IGPS catalyzes the conversion of PRFAR and glutamine to IGP, AICAR and glutamate. The HisF subunit catalyzes the cyclization activity that produces IGP and AICAR from PRFAR using the ammonia provided by the HisH subunit. The polypeptide is Imidazole glycerol phosphate synthase subunit HisF (Kocuria rhizophila (strain ATCC 9341 / DSM 348 / NBRC 103217 / DC2201)).